Here is a 406-residue protein sequence, read N- to C-terminus: 3-isopropylmalate dehydrogenase, chloroplastic (406 aa).

The N-terminal 34 residues, methionine 1–cysteine 34, are a transit peptide targeting the chloroplast. At serine 71 the chain carries Phosphoserine. Glycine 117–glutamate 130 serves as a coordination point for NAD(+). Residues arginine 137, arginine 147, arginine 175, and aspartate 265 each contribute to the substrate site. Aspartate 265, aspartate 289, and aspartate 293 together coordinate Mg(2+). Glycine 323 to asparagine 335 serves as a coordination point for NAD(+).

This sequence belongs to the isocitrate and isopropylmalate dehydrogenases family. As to quaternary structure, homodimer. Mg(2+) serves as cofactor. Requires Mn(2+) as cofactor.

Its subcellular location is the plastid. The protein localises to the chloroplast. It carries out the reaction (2R,3S)-3-isopropylmalate + NAD(+) = 4-methyl-2-oxopentanoate + CO2 + NADH. Its pathway is amino-acid biosynthesis; L-leucine biosynthesis; L-leucine from 3-methyl-2-oxobutanoate: step 3/4. In terms of biological role, catalyzes the oxidation of 3-carboxy-2-hydroxy-4-methylpentanoate (3-isopropylmalate) to 3-carboxy-4-methyl-2-oxopentanoate. The product decarboxylates to 4-methyl-2 oxopentanoate. In Brassica napus (Rape), this protein is 3-isopropylmalate dehydrogenase, chloroplastic.